The primary structure comprises 888 residues: Serine/threonine-protein phosphatase 1 regulatory subunit 10 (888 aa).

The segment at 1–348 (MGSGPIDPKE…EPAPPAEPMD (348 aa)) is interaction with TOX4. Residues 73 to 147 (KLLNNWLTYS…SDWMAVIRSQ (75 aa)) enclose the TFIIS N-terminal domain. 4 disordered regions span residues 147 to 213 (QSST…STGL), 247 to 270 (SATA…NTAP), 306 to 400 (KKKK…KTVT), and 534 to 853 (VETL…HGGD). 2 stretches are compositionally biased toward basic and acidic residues: residues 153 to 166 (AEKD…EGKS) and 174 to 196 (PLTE…EKPK). A Glycyl lysine isopeptide (Lys-Gly) (interchain with G-Cter in SUMO2) cross-link involves residue lysine 179. Low complexity predominate over residues 248–258 (ATAAPGDAAPP). A Glycyl lysine isopeptide (Lys-Gly) (interchain with G-Cter in SUMO2) cross-link involves residue lysine 262. The residue at position 313 (serine 313) is a Phosphoserine. The segment covering 325-334 (KTSTEQSTAK) has biased composition (polar residues). Residue serine 382 is modified to Phosphoserine. Positions 388–417 (QLTRKGRKRKTVTWPEEGKLREYFYFELDE) are necessary for interaction with PPP1CA. The interval 393–408 (GRKRKTVTWPEEGKLR) is necessary for interaction with PPP1CC. A PP1-binding motif motif is present at residues 394-423 (RKRKTVTWPEEGKLREYFYFELDETERVNV). Phosphothreonine is present on threonine 398. The interval 418–619 (TERVNVNKIK…LKQMLVPHGL (202 aa)) is interaction with WDR82. Gly residues predominate over residues 540–551 (GGSGGSPDGAGG). Serine 545 and serine 591 each carry phosphoserine. The segment covering 583–595 (EILTSIMGSPNSH) has biased composition (polar residues). A compositionally biased stretch (basic and acidic residues) spans 596–611 (PSEELLKQPDYSDKLK). A compositionally biased stretch (pro residues) spans 644 to 655 (PPGPGGPMPGPH). Arginine 665 is modified (omega-N-methylarginine). A compositionally biased stretch (low complexity) spans 674 to 690 (RGGDPFWDGPGDPMRGG). Omega-N-methylarginine occurs at positions 693 and 737. Gly residues-rich tracts occupy residues 724–762 (ARGG…GSMG) and 784–794 (GPGGNMGGSGG). Residues 811–851 (PHDVPSHRGHDHRGPPPHEHRGHDGHGGGGHRGHDGGHSHG) show a composition bias toward basic and acidic residues. The segment at 854–882 (MSNRPVCRHFMMKGNCRYENNCAFYHPGV) adopts a C3H1-type zinc-finger fold.

As to quaternary structure, component of the PNUTS-PP1 complex (also named PTW/PP1 complex), composed of PPP1R10/PNUTS, TOX4, WDR82, and PPP1CA (or PPP1CB or PPP1CC). Phosphorylated on Ser-398 by PKA within the region necessary for interaction with PPP1CA.

The protein localises to the nucleus. Its subcellular location is the chromosome. In terms of biological role, substrate-recognition component of the PNUTS-PP1 protein phosphatase complex, a protein phosphatase 1 (PP1) complex that promotes RNA polymerase II transcription pause-release, allowing transcription elongation. Promoter-proximal pausing by RNA polymerase II is a transcription halt following transcription initiation but prior to elongation, which acts as a checkpoint to control that transcripts are favorably configured for transcriptional elongation. The PNUTS-PP1 complex mediates the release of RNA polymerase II from promoter-proximal region of genes by catalyzing dephosphorylation of proteins involved in transcription, such as AFF4, CDK9, MEPCE, INTS12, NCBP1, POLR2M/GDOWN1 and SUPT6H. The PNUTS-PP1 complex also regulates RNA polymerase II transcription termination by mediating dephosphorylation of SUPT5H in termination zones downstream of poly(A) sites, thereby promoting deceleration of RNA polymerase II transcription. PNUTS-PP1 complex is also involved in the response to replication stress by mediating dephosphorylation of POLR2A at 'Ser-5' of the CTD, promoting RNA polymerase II degradation. The PNUTS-PP1 complex also plays a role in the control of chromatin structure and cell cycle progression during the transition from mitosis into interphase. PNUTS-PP1 complex mediates dephosphorylation of MYC, promoting MYC stability by preventing MYC ubiquitination by the SCF(FBXW7) complex. In addition to acts as a substrate-recognition component, PPP1R10/PNUTS also acts as a nuclear targeting subunit for the PNUTS-PP1 complex. In some context, PPP1R10/PNUTS also acts as an inhibitor of protein phosphatase 1 (PP1) activity by preventing access to substrates, such as RB. The sequence is that of Serine/threonine-protein phosphatase 1 regulatory subunit 10 from Mus musculus (Mouse).